Here is a 96-residue protein sequence, read N- to C-terminus: Myticin-A (96 aa).

Residues 1-20 (MKATILLAVLVAVFVAGTEA) form the signal peptide. Positions 61–96 (VNNPFRVNQVAKSINDLDYTPIMKSMENLDNGMDML) are cleaved as a propeptide — removed in mature form.

In terms of processing, contains four disulfide bonds. In terms of tissue distribution, hemocytes.

It localises to the secreted. Its function is as follows. Bacteriolytic activity against Gram-positive bacteria M.luteus, B.megaterium and A.viridans. This Mytilus galloprovincialis (Mediterranean mussel) protein is Myticin-A.